Reading from the N-terminus, the 199-residue chain is Homeobox protein ceh-19 (199 aa).

The disordered stretch occupies residues 1-42 (MAFNIESLLEKKSNPVEEGNDFEEENDSEKNGEEDEEEEEKN). The segment covering 18–40 (EGNDFEEENDSEKNGEEDEEEEE) has biased composition (acidic residues). A DNA-binding region (homeobox) is located at residues 94-153 (ERKPRQAYSARQLDRLETEFQTDKYLSVNKRIQLSQTLNLTETQIKTWFQNRRTKWKKQL).

It localises to the nucleus. In terms of biological role, probable transcription factor. Required for MC motor neuron differentiation and function, including role in modulating pharyngeal pumping. Regulates gene expression of FMRFamide-like neuropeptide flp-2 in MC motor neurons. May act downstream of transcription factor pha-4. The chain is Homeobox protein ceh-19 (ceh-19) from Caenorhabditis elegans.